The following is a 328-amino-acid chain: Renalase (328 aa).

Residues Ala-13, 32–33, Arg-40, and 56–57 contribute to the FAD site; these read DK and QY. Substrate contacts are provided by residues 57–61 and 96–98; these read YFTAR and SPD. FAD is bound at residue Ile-128. Residue Thr-185 participates in substrate binding. Asp-302 contributes to the FAD binding site. Position 308 (Arg-308) interacts with substrate. Val-309 serves as a coordination point for FAD.

This sequence belongs to the bacterial renalase family. Requires FAD as cofactor.

It catalyses the reaction 1,2-dihydro-beta-NAD + O2 + H(+) = H2O2 + NAD(+). The enzyme catalyses 1,2-dihydro-beta-NADP + O2 + H(+) = H2O2 + NADP(+). It carries out the reaction 1,6-dihydro-beta-NADP + O2 + H(+) = H2O2 + NADP(+). The catalysed reaction is 1,6-dihydro-beta-NAD + O2 + H(+) = H2O2 + NAD(+). In terms of biological role, catalyzes the oxidation of the 1,2-dihydro- and 1,6-dihydro- isomeric forms of beta-NAD(P) back to beta-NAD(P)+. Has a preference for 1,2-dihydro-beta-NAD as substrate. May serve to protect primary metabolism dehydrogenases from inhibition by the 1,2-dihydro- and 1,6-dihydro-beta-NAD(P) isomers. This Pseudomonas savastanoi pv. phaseolicola (strain 1448A / Race 6) (Pseudomonas syringae pv. phaseolicola (strain 1448A / Race 6)) protein is Renalase.